A 394-amino-acid chain; its full sequence is Argininosuccinate synthase (394 aa).

Ala8–Ser16 is a binding site for ATP. L-citrulline contacts are provided by Tyr86 and Ser91. Residue Gly116 participates in ATP binding. L-aspartate-binding residues include Thr118, Asn122, and Asp123. Asn122 provides a ligand contact to L-citrulline. L-citrulline-binding residues include Arg126, Ser172, Ser181, Glu257, and Tyr269.

The protein belongs to the argininosuccinate synthase family. Type 1 subfamily. Homotetramer.

The protein resides in the cytoplasm. It carries out the reaction L-citrulline + L-aspartate + ATP = 2-(N(omega)-L-arginino)succinate + AMP + diphosphate + H(+). The protein operates within amino-acid biosynthesis; L-arginine biosynthesis; L-arginine from L-ornithine and carbamoyl phosphate: step 2/3. This is Argininosuccinate synthase from Methanosarcina acetivorans (strain ATCC 35395 / DSM 2834 / JCM 12185 / C2A).